Here is a 200-residue protein sequence, read N- to C-terminus: MLIATRNEGKTKEFRAIFDKLGYDVENLNDYPDLPEVAETGMTFEENARLKAETISQLTGKMVLADDSGLKVDVLGGLPGVWSARFAGVGATDRENNAKLLHELAMVFELKDRSAQFHTTLVVASPNKESLVVEADWSGYINFEPKGENGFGYDPLFLVGETGESSAELTLEEKNSQSHRALAVKKLLEVFPSWQSKPSL.

A substrate-binding site is contributed by 5-10; sequence TRNEGK. Aspartate 67 serves as the catalytic Proton acceptor. Aspartate 67 provides a ligand contact to Mg(2+). Substrate is bound by residues serine 68, 151–154, lysine 174, and 179–180; these read FGYD and HR.

The protein belongs to the HAM1 NTPase family. Homodimer. Mg(2+) serves as cofactor.

It carries out the reaction XTP + H2O = XMP + diphosphate + H(+). The catalysed reaction is dITP + H2O = dIMP + diphosphate + H(+). The enzyme catalyses ITP + H2O = IMP + diphosphate + H(+). In terms of biological role, pyrophosphatase that catalyzes the hydrolysis of nucleoside triphosphates to their monophosphate derivatives, with a high preference for the non-canonical purine nucleotides XTP (xanthosine triphosphate), dITP (deoxyinosine triphosphate) and ITP. Seems to function as a house-cleaning enzyme that removes non-canonical purine nucleotides from the nucleotide pool, thus preventing their incorporation into DNA/RNA and avoiding chromosomal lesions. This chain is dITP/XTP pyrophosphatase, found in Streptococcus pneumoniae serotype 4 (strain ATCC BAA-334 / TIGR4).